The chain runs to 740 residues: Alpha-1,6-mannosylglycoprotein 6-beta-N-acetylglucosaminyltransferase A (740 aa).

The Cytoplasmic portion of the chain corresponds to 1 to 13 (MAFFTPWKLSSQK). The helical; Signal-anchor for type II membrane protein transmembrane segment at 14–30 (LGFFLVTFGFIWGMMLL) threads the bilayer. Residues 31–740 (HFTIQQRTQP…GQVALCKDCL (710 aa)) lie on the Lumenal side of the membrane. N-linked (GlcNAc...) asparagine glycans are attached at residues Asn-109, Asn-114, and Asn-117. 9 disulfide bridges follow: Cys-144/Cys-182, Cys-155/Cys-195, Cys-171/Cys-337, Cys-371/Cys-625, Cys-648/Cys-723, Cys-652/Cys-725, Cys-659/Cys-712, Cys-680/Cys-701, and Cys-736/Cys-739. Positions 212–740 (NSLAEIRTDF…GQVALCKDCL (529 aa)) are sufficient for catalytic activity. Asn-333 carries an N-linked (GlcNAc...) asparagine glycan. 377 to 378 (DS) serves as a coordination point for substrate. Asn-432 and Asn-446 each carry an N-linked (GlcNAc...) asparagine glycan. Position 525 (Glu-525) interacts with UDP-N-acetyl-alpha-D-glucosamine. Lys-553 contributes to the substrate binding site.

Belongs to the glycosyltransferase 18 family. N-glycosylated. Post-translationally, a secreted form is released from the membrane after cleavage by gamma-secretase.

It is found in the golgi apparatus membrane. Its subcellular location is the secreted. It carries out the reaction N(4)-{beta-D-GlcNAc-(1-&gt;2)-[beta-D-GlcNAc-(1-&gt;4)]-alpha-D-Man-(1-&gt;3)-[beta-D-GlcNAc-(1-&gt;2)-alpha-D-Man-(1-&gt;6)]-beta-D-Man-(1-&gt;4)-beta-D-GlcNAc-(1-&gt;4)-beta-D-GlcNAc}-L-asparaginyl-[protein] + UDP-N-acetyl-alpha-D-glucosamine = N(4)-{beta-D-GlcNAc-(1-&gt;2)-[beta-D-GlcNAc-(1-&gt;4)]-alpha-D-Man-(1-&gt;3)-[beta-D-GlcNAc-(1-&gt;2)-[beta-D-GlcNAc-(1-&gt;6)]-alpha-D-Man-(1-&gt;6)]-beta-D-Man-(1-&gt;4)-beta-D-GlcNAc-(1-&gt;4)-beta-D-GlcNAc}-L-asparaginyl-[protein] + UDP + H(+). Its pathway is protein modification; protein glycosylation. In terms of biological role, catalyzes the addition of N-acetylglucosamine (GlcNAc) in beta 1-6 linkage to the alpha-linked mannose of biantennary N-linked oligosaccharides. Catalyzes an important step in the biosynthesis of branched, complex-type N-glycans, such as those found on EGFR, TGFR (TGF-beta receptor) and CDH2. Via its role in the biosynthesis of complex N-glycans, plays an important role in the activation of cellular signaling pathways, reorganization of the actin cytoskeleton, cell-cell adhesion and cell migration. MGAT5-dependent EGFR N-glycosylation enhances the interaction between EGFR and LGALS3 and thereby prevents rapid EGFR endocytosis and prolongs EGFR signaling. Required for efficient interaction between TGFB1 and its receptor. Enhances activation of intracellular signaling pathways by several types of growth factors, including FGF2, PDGF, IGF, TGFB1 and EGF. MGAT5-dependent CDH2 N-glycosylation inhibits CDH2-mediated homotypic cell-cell adhesion and contributes to the regulation of downstream signaling pathways. Promotes cell migration. Contributes to the regulation of the inflammatory response. MGAT5-dependent TCR N-glycosylation enhances the interaction between TCR and LGALS3, limits agonist-induced TCR clustering, and thereby dampens TCR-mediated responses to antigens. Required for normal leukocyte evasation and accumulation at sites of inflammation. Inhibits attachment of monocytes to the vascular endothelium and subsequent monocyte diapedesis. Functionally, promotes proliferation of umbilical vein endothelial cells and angiogenesis, at least in part by promoting the release of the growth factor FGF2 from the extracellular matrix. The protein is Alpha-1,6-mannosylglycoprotein 6-beta-N-acetylglucosaminyltransferase A (MGAT5) of Cricetulus griseus (Chinese hamster).